Here is a 604-residue protein sequence, read N- to C-terminus: Phenylalanine--tRNA ligase beta subunit (604 aa).

The region spanning 327 to 402 is the B5 domain; it reads YFQEKREVAH…LGRTLDRFSP (76 aa). Mg(2+) contacts are provided by D380, D386, E389, and E390.

It belongs to the phenylalanyl-tRNA synthetase beta subunit family. Type 2 subfamily. As to quaternary structure, tetramer of two alpha and two beta subunits. The cofactor is Mg(2+).

The protein localises to the cytoplasm. The catalysed reaction is tRNA(Phe) + L-phenylalanine + ATP = L-phenylalanyl-tRNA(Phe) + AMP + diphosphate + H(+). The protein is Phenylalanine--tRNA ligase beta subunit of Treponema pallidum subsp. pallidum (strain SS14).